A 150-amino-acid polypeptide reads, in one-letter code: uncharacterized protein (150 aa).

Helical transmembrane passes span 12 to 30 (IVQR…YFLF), 40 to 62 (RLLS…LVLF), 74 to 96 (IRRT…VLSG), and 106 to 128 (ALID…SRAV).

It localises to the cell membrane. This is an uncharacterized protein from Archaeoglobus fulgidus (strain ATCC 49558 / DSM 4304 / JCM 9628 / NBRC 100126 / VC-16).